The sequence spans 272 residues: Methyl-CpG-binding domain-containing protein 2 (272 aa).

Over residues 1–15 (MSMSQSRAVQRSSSP) the composition is skewed to polar residues. Residues 1 to 24 (MSMSQSRAVQRSSSPNEDRGENQL) are disordered. The segment at 53 to 112 (CPSIGAFTVQCASCFKWRLMPSMQKYEEIREQLLENPFFCDTAREWKPDISCDVPADIYQ) adopts a CW-type zinc-finger fold. The short motif at 62-104 (QCASCFKWRLMPSMQKYEEIREQLLENPFFCDTAREWKPDISC) is the MBD-associated domain (MAD) element. Zn(2+) is bound by residues cysteine 63, cysteine 66, cysteine 92, and cysteine 104. One can recognise an MBD domain in the interval 118-192 (WAIDKPNISR…SQFSFQIPKP (75 aa)). Residues 236-250 (LGTPTESGLNNSHYQ) show a composition bias toward polar residues. Residues 236-272 (LGTPTESGLNNSHYQPSKKKKTSTLSIFGSNDELADR) are disordered.

Interacts (via MBD domain) with DDM1. In terms of tissue distribution, expressed in buds, flowers, stems, siliques and mature seeds.

The protein resides in the nucleus. Functionally, probable transcriptional regulator. In Arabidopsis thaliana (Mouse-ear cress), this protein is Methyl-CpG-binding domain-containing protein 2 (MBD2).